Here is a 250-residue protein sequence, read N- to C-terminus: Peptidyl-tRNA hydrolase, mitochondrial (250 aa).

The N-terminal 45 residues, 1–45, are a transit peptide targeting the mitochondrion; it reads MRLLSGASASRIPCPLLSLARARARCLPVPASATACRAASSSAAA. Tyrosine 68 serves as a coordination point for tRNA. Histidine 73 acts as the Proton acceptor in catalysis. TRNA is bound by residues phenylalanine 118, asparagine 120, and asparagine 166.

It belongs to the PTH family.

It localises to the mitochondrion. It catalyses the reaction an N-acyl-L-alpha-aminoacyl-tRNA + H2O = an N-acyl-L-amino acid + a tRNA + H(+). Its function is as follows. The natural substrate for this enzyme may be peptidyl-tRNAs which drop off the ribosome during protein synthesis. This Oryza sativa subsp. japonica (Rice) protein is Peptidyl-tRNA hydrolase, mitochondrial.